Reading from the N-terminus, the 150-residue chain is uncharacterized protein (150 aa).

A Flavodoxin-like domain is found at V3–A145.

It belongs to the flavodoxin family. MioC subfamily. FMN serves as cofactor.

Probable electron transporter. This is an uncharacterized protein from Pseudomonas aeruginosa (strain ATCC 15692 / DSM 22644 / CIP 104116 / JCM 14847 / LMG 12228 / 1C / PRS 101 / PAO1).